The chain runs to 1070 residues: DNA-directed RNA polymerase subunit beta (1070 aa).

This sequence belongs to the RNA polymerase beta chain family. As to quaternary structure, in plastids the minimal PEP RNA polymerase catalytic core is composed of four subunits: alpha, beta, beta', and beta''. When a (nuclear-encoded) sigma factor is associated with the core the holoenzyme is formed, which can initiate transcription.

It localises to the plastid. The protein localises to the chloroplast. The catalysed reaction is RNA(n) + a ribonucleoside 5'-triphosphate = RNA(n+1) + diphosphate. DNA-dependent RNA polymerase catalyzes the transcription of DNA into RNA using the four ribonucleoside triphosphates as substrates. In Silene latifolia (White campion), this protein is DNA-directed RNA polymerase subunit beta.